The primary structure comprises 468 residues: Cysteine--tRNA ligase (468 aa).

Cys33 is a Zn(2+) binding site. The short motif at 35–45 is the 'HIGH' region element; the sequence is ATVQGLPHIGH. The Zn(2+) site is built by Cys211, His236, and Glu240. A 'KMSKS' region motif is present at residues 267-271; it reads KMSKS. Lys270 contacts ATP.

It belongs to the class-I aminoacyl-tRNA synthetase family. As to quaternary structure, monomer. Requires Zn(2+) as cofactor.

The protein resides in the cytoplasm. It catalyses the reaction tRNA(Cys) + L-cysteine + ATP = L-cysteinyl-tRNA(Cys) + AMP + diphosphate. This chain is Cysteine--tRNA ligase, found in Mycobacterium ulcerans (strain Agy99).